The primary structure comprises 533 residues: MSAPVPQLVNISHALQASTIQQIRLDMVDFNKDCKLSSIQLARIDKYIDSLQAALNQFTKDNLHIERKEKNVTEADIQLYSGLKSMYLDYLNQLIKLKHEKQHHSTPPIANDVSLDFFVNQLPKFSPEERKNYIDNLILNKNSHNRLSKMDGLVDAVINLCVLDTSVAENVRSYMKLLDTLGFQKGSNSTGTKANLKKKLASSKAKIKDSEKEKEKEKDKSKVKMKTKLKPSPLLNNDDKNSSPSPTASTSSMKKLKSGLFNKNEAKSTESLPTSSKKKLSFSKYLNKDDADMTKLGTKRSIDVDFKVNPEASTVASNIISSSTSGSSTTTVATPASSEEPLKKKTKISVQDSNVQSILRNGKPKKARISSIKFLDDSQLIKVYGDDLPNQGLQVSPTQLKKILKPFKEGEPKEIILFEDMSIKLKPLDLMFLKNTNSDDYMDISETKGGPIHCETRTPLIYRKNFNHFNPDLNKRPPREPIEFDLNGNTNSTPTIAKAFGKNSLLLRKDRGGLPYKHVPIVKRNKYPPRPVH.

Disordered stretches follow at residues 187 to 254 (SNST…SSMK), 260 to 279 (LFNK…SKKK), and 321 to 344 (SSST…PLKK). The segment covering 206 to 222 (KIKDSEKEKEKEKDKSK) has biased composition (basic and acidic residues). Residues 242–252 (SSPSPTASTSS) show a composition bias toward low complexity. Positions 321–338 (SSSTSGSSTTTVATPASS) are enriched in low complexity.

Interacts with FIR1. Component of the cleavage and polyadenylation factor (CPF) complex, which is composed of PTI1, SYC1, SSU72, GLC7, MPE1, REF2, PFS2, PTA1, YSH1/BRR5, SWD2, CFT2/YDH1, YTH1, CFT1/YHH1, FIP1 and PAP1. Component of the APT complex, which is a subcomplex of CPF, and is composed of PTI1, SYC1, SSU72, GLC7, REF2, PTA1 and SWD2.

It is found in the nucleus. In terms of biological role, RNA-binding component of the cleavage and polyadenylation factor (CPF) complex, which plays a key role in polyadenylation-dependent pre-mRNA 3'-end formation and cooperates with cleavage factors including the CFIA complex and NAB4/CFIB. Negative regulator of poly(A) synthesis. Component of the APT complex, which may be involved in polyadenylation-independent transcript 3'-end formation. REF2 is required for 3'-end formation of snoRNAs. This is RNA end formation protein 2 (REF2) from Saccharomyces cerevisiae (strain ATCC 204508 / S288c) (Baker's yeast).